The primary structure comprises 158 residues: Class 10 plant pathogenesis-related protein 2A (158 aa).

Aspartate 8 provides a ligand contact to trans-zeatin. The Ca(2+) site is built by proline 32, valine 35, and isoleucine 38. 4 residues coordinate trans-zeatin: glutamate 60, histidine 69, tyrosine 81, and tyrosine 83.

Belongs to the BetVI family.

It is found in the cytoplasm. Its subcellular location is the cytosol. Functionally, class II ribonuclease (RNase). Binds to cytokinins. Interacts with melatonin. The polypeptide is Class 10 plant pathogenesis-related protein 2A (Lupinus luteus (European yellow lupine)).